Consider the following 445-residue polypeptide: Histamine H3 receptor (445 aa).

The Extracellular portion of the chain corresponds to 1–39 (MERAPPDGLMNASGTLAGEAAAAGGARGFSAAWTAVLAA). N-linked (GlcNAc...) asparagine glycosylation occurs at asparagine 11. A helical membrane pass occupies residues 40–60 (LMALLIVATVLGNALVMLAFV). Over 61-70 (ADSSLRTQNN) the chain is Cytoplasmic. A helical membrane pass occupies residues 71–91 (FFLLNLAISDFLVGAFCIPLY). Residues 92 to 108 (VPYVLTGRWTFGRGLCK) are Extracellular-facing. The cysteines at positions 107 and 188 are disulfide-linked. A helical transmembrane segment spans residues 109 to 129 (LWLVVDYLLCASSVFNIVLIS). The Cytoplasmic portion of the chain corresponds to 130 to 156 (YDRFLSVTRAVSYRAQQGDTRRAVRKM). The helical transmembrane segment at 157–177 (ALVWVLAFLLYGPAILSWEYL) threads the bilayer. Topologically, residues 178–196 (SGGSSIPEGHCYAEFFYNW) are extracellular. Residues 197 to 217 (YFLITASTLEFFTPFLSVTFF) form a helical membrane-spanning segment. At 218–359 (NLSIYLNIQR…LSRDKKVAKS (142 aa)) the chain is on the cytoplasmic side. 2 disordered regions span residues 234-259 (DGGR…PSCW) and 286-336 (AGEA…LEKR). Pro residues predominate over residues 241–256 (PEPPPDAQPSPPPAPP). The span at 290–299 (ALGGGSGGGA) shows a compositional bias: gly residues. Over residues 300-312 (AASPTSSSGSSSR) the composition is skewed to low complexity. The chain crosses the membrane as a helical span at residues 360 to 380 (LAIIVSIFGLCWAPYTLLMII). Residues 381-396 (RAACHGRCIPDYWYET) are Extracellular-facing. The chain crosses the membrane as a helical span at residues 397-417 (SFWLLWANSAVNPVLYPLCHY). The Cytoplasmic segment spans residues 418–445 (SFRRAFTKLLCPQKLKVQPHGSLEQCWK). Position 439 is a phosphoserine (serine 439).

This sequence belongs to the G-protein coupled receptor 1 family. Expressed abundantly in brain, most notably throughout the thalamus, the ventromedial hypothalamus and the caudate nucleus. Isoform 1 is largely predominant in all tissues.

The protein localises to the cell membrane. The H3 subclass of histamine receptors could mediate the histamine signals in CNS and peripheral nervous system. Signals through the inhibition of adenylate cyclase and displays high constitutive activity (spontaneous activity in the absence of agonist). The polypeptide is Histamine H3 receptor (Hrh3) (Rattus norvegicus (Rat)).